A 262-amino-acid polypeptide reads, in one-letter code: 14-3-3 protein I (262 aa).

The protein belongs to the 14-3-3 family. In terms of assembly, homodimer. Forms a complex composed of CDPK1, PKA regulatory subunit PKAr and 14-3-3I; the complex is formed in merozoites in response to low extracellular level of K(+) and may play a role in microneme secretion. Interacts with CDPK1 (when phosphorylated) in a Ca(2+)-independent manner; the interaction does not regulate CDPK1 catalytic activity but is required for merozoite invasion of host erythrocytes. Interacts with PKA regulatory subunit PKAr (when phosphorylated) in a Ca(2+)-dependent manner. Interacts with histone H3 (when phosphorylated at 'Ser-28' or when phosphorylated at 'Ser-28' and 'Ser-32').

It is found in the cell membrane. The protein resides in the cytoplasm. The protein localises to the nucleus. Functionally, adapter protein which binds to its partners, usually via a phosphoserine or phosphothreonine motif. Binding generally results in the modulation of the activity and/or cellular localization of the binding partner. Via its interaction with CDPK1 and PKAr, involved in merozoite microneme secretion and thus in merozoite invasion of host erythrocytes. This is 14-3-3 protein I from Plasmodium falciparum (isolate 3D7).